The primary structure comprises 57 residues: uncharacterized protein (57 aa).

The chain crosses the membrane as a helical span at residues 34–54 (AALLDAAALVVIPGLLTAAAV).

Its subcellular location is the membrane. This is an uncharacterized protein from Dictyostelium discoideum (Social amoeba).